Consider the following 223-residue polypeptide: MKRTKNINHSSFRKSWSARHLTPVALAVTAVFMLAGCEKSDETVSLYQNADDCSAANPGKAAECTTAYTNAVKEAERTAPKYATREDCVAEFGEGQCQQTPAQAGVAPENQAQAQSSGSFWMPLMAGYMMGRLMGGGMAQQQPLFSSKNPASPAYGQYTDASGKSYGAAQPGRTMNVPKTAMAPKPATTTTVTRGGFGESVAKQSTMQRSAAGSTSSSRSMGG.

The interval 165-223 (SYGAAQPGRTMNVPKTAMAPKPATTTTVTRGGFGESVAKQSTMQRSAAGSTSSSRSMGG) is disordered. Low complexity-rich tracts occupy residues 177 to 193 (VPKT…TTVT) and 209 to 223 (RSAA…SMGG).

Belongs to the UPF0441 family.

The chain is UPF0441 protein KPN78578_33850 from Klebsiella pneumoniae subsp. pneumoniae (strain ATCC 700721 / MGH 78578).